A 450-amino-acid polypeptide reads, in one-letter code: Chromosomal replication initiator protein DnaA (450 aa).

Residues 1–73 (MNTKELWIEV…KNILKKLTGI (73 aa)) form a domain I, interacts with DnaA modulators region. The segment at 73–104 (IQYNISFELEKNINKQASVISKIDTLTENNNL) is domain II. The tract at residues 105–326 (AYYENYTFEN…GAIKRLLFLA (222 aa)) is domain III, AAA+ region. ATP is bound by residues Gly149, Gly151, Lys152, and Thr153. Residues 327 to 450 (VMNKKPNEII…NAIRRKIEGR (124 aa)) form a domain IV, binds dsDNA region.

It belongs to the DnaA family. In terms of assembly, oligomerizes as a right-handed, spiral filament on DNA at oriC.

The protein resides in the cytoplasm. Its function is as follows. Plays an essential role in the initiation and regulation of chromosomal replication. ATP-DnaA binds to the origin of replication (oriC) to initiate formation of the DNA replication initiation complex once per cell cycle. Binds the DnaA box (a 9 base pair repeat at the origin) and separates the double-stranded (ds)DNA. Forms a right-handed helical filament on oriC DNA; dsDNA binds to the exterior of the filament while single-stranded (ss)DNA is stabiized in the filament's interior. The ATP-DnaA-oriC complex binds and stabilizes one strand of the AT-rich DNA unwinding element (DUE), permitting loading of DNA polymerase. After initiation quickly degrades to an ADP-DnaA complex that is not apt for DNA replication. Binds acidic phospholipids. The chain is Chromosomal replication initiator protein DnaA from Spiroplasma citri.